The chain runs to 211 residues: Uracil phosphoribosyltransferase (211 aa).

5-phospho-alpha-D-ribose 1-diphosphate is bound by residues Arg-78, Arg-103, and Asp-130–Ser-138. Uracil is bound by residues Ile-193 and Gly-198–Ala-200. Asp-199 provides a ligand contact to 5-phospho-alpha-D-ribose 1-diphosphate.

Belongs to the UPRTase family. Mg(2+) is required as a cofactor.

It carries out the reaction UMP + diphosphate = 5-phospho-alpha-D-ribose 1-diphosphate + uracil. The protein operates within pyrimidine metabolism; UMP biosynthesis via salvage pathway; UMP from uracil: step 1/1. With respect to regulation, allosterically activated by GTP. Catalyzes the conversion of uracil and 5-phospho-alpha-D-ribose 1-diphosphate (PRPP) to UMP and diphosphate. The sequence is that of Uracil phosphoribosyltransferase from Acinetobacter baylyi (strain ATCC 33305 / BD413 / ADP1).